The primary structure comprises 370 residues: 3-dehydroquinate synthase (370 aa).

Residues 107 to 111 (GVIGD), 131 to 132 (TS), lysine 144, and lysine 153 contribute to the NAD(+) site. Glutamate 186, histidine 249, and histidine 267 together coordinate Zn(2+).

Belongs to the sugar phosphate cyclases superfamily. Dehydroquinate synthase family. The cofactor is Co(2+). Zn(2+) serves as cofactor. Requires NAD(+) as cofactor.

The protein resides in the cytoplasm. The catalysed reaction is 7-phospho-2-dehydro-3-deoxy-D-arabino-heptonate = 3-dehydroquinate + phosphate. Its pathway is metabolic intermediate biosynthesis; chorismate biosynthesis; chorismate from D-erythrose 4-phosphate and phosphoenolpyruvate: step 2/7. Catalyzes the conversion of 3-deoxy-D-arabino-heptulosonate 7-phosphate (DAHP) to dehydroquinate (DHQ). The polypeptide is 3-dehydroquinate synthase (Roseobacter denitrificans (strain ATCC 33942 / OCh 114) (Erythrobacter sp. (strain OCh 114))).